The primary structure comprises 239 residues: Probable 2-phosphosulfolactate phosphatase (239 aa).

Belongs to the ComB family. Requires Mg(2+) as cofactor.

It catalyses the reaction (2R)-O-phospho-3-sulfolactate + H2O = (2R)-3-sulfolactate + phosphate. This chain is Probable 2-phosphosulfolactate phosphatase, found in Clostridium botulinum (strain 657 / Type Ba4).